Reading from the N-terminus, the 257-residue chain is Type III pantothenate kinase (257 aa).

Residue 6 to 13 (DVGNTSTK) participates in ATP binding. Residue 109–112 (GADR) participates in substrate binding. Catalysis depends on D111, which acts as the Proton acceptor. Residue D132 coordinates K(+). ATP is bound at residue T135. T187 is a substrate binding site.

It belongs to the type III pantothenate kinase family. As to quaternary structure, homodimer. It depends on NH4(+) as a cofactor. K(+) is required as a cofactor.

The protein resides in the cytoplasm. The enzyme catalyses (R)-pantothenate + ATP = (R)-4'-phosphopantothenate + ADP + H(+). The protein operates within cofactor biosynthesis; coenzyme A biosynthesis; CoA from (R)-pantothenate: step 1/5. In terms of biological role, catalyzes the phosphorylation of pantothenate (Pan), the first step in CoA biosynthesis. This is Type III pantothenate kinase from Anaplasma marginale (strain St. Maries).